A 158-amino-acid chain; its full sequence is Transcription elongation factor GreB (158 aa).

Belongs to the GreA/GreB family. GreB subfamily.

Necessary for efficient RNA polymerase transcription elongation past template-encoded arresting sites. The arresting sites in DNA have the property of trapping a certain fraction of elongating RNA polymerases that pass through, resulting in locked ternary complexes. Cleavage of the nascent transcript by cleavage factors such as GreA or GreB allows the resumption of elongation from the new 3'terminus. GreB releases sequences of up to 9 nucleotides in length. This chain is Transcription elongation factor GreB, found in Escherichia coli (strain K12).